Reading from the N-terminus, the 489-residue chain is Cytochrome P450 2C70 (489 aa).

The N-terminal stretch at 1–27 (MALFIFLGIWLSCFLFLFLWNQHRGRG) is a signal peptide. Position 434 (cysteine 434) interacts with heme.

The protein belongs to the cytochrome P450 family. Requires heme as cofactor. Expressed in liver.

The protein localises to the endoplasmic reticulum membrane. It localises to the microsome membrane. It carries out the reaction chenodeoxycholate + reduced [NADPH--hemoprotein reductase] + O2 = alpha-muricholate + oxidized [NADPH--hemoprotein reductase] + H2O + H(+). The catalysed reaction is ursodeoxycholate + reduced [NADPH--hemoprotein reductase] + O2 = beta-muricholate + oxidized [NADPH--hemoprotein reductase] + H2O + H(+). In terms of biological role, a cytochrome P450 monooxygenase involved in muricholic acid (MCA) synthesis. Hydroxylates at the 6-beta position two major bile acids, chenodeoxycholic acid (CDCA) and ursodeoxycholic acid (UDCA) to form alpha-MCA and beta-MCA, respectively. May regulate NR1H4/farnesoid X receptor signaling, as taurine-conjugated MCAs are antagonists of NR1H4. Mechanistically, uses molecular oxygen inserting one oxygen atom into a substrate, and reducing the second into a water molecule, with two electrons provided by NADPH via cytochrome P450 reductase (CPR; NADPH-ferrihemoprotein reductase). The protein is Cytochrome P450 2C70 of Mus musculus (Mouse).